A 293-amino-acid chain; its full sequence is GTPase Era (293 aa).

Positions 3 to 170 constitute an Era-type G domain; the sequence is KSGFITIIGR…VELMVKYMPE (168 aa). A G1 region spans residues 11–18; that stretch reads GRPNVGKS. 11–18 contributes to the GTP binding site; that stretch reads GRPNVGKS. The segment at 37–41 is G2; the sequence is QTTRN. Residues 58–61 form a G3 region; that stretch reads DTPG. GTP is bound by residues 58-62 and 120-123; these read DTPGI and NKID. Residues 120 to 123 form a G4 region; it reads NKID. The G5 stretch occupies residues 149-151; it reads ISA. Positions 201 to 278 constitute a KH type-2 domain; the sequence is LSKEVPHGIA…YLEVWVKVKK (78 aa).

The protein belongs to the TRAFAC class TrmE-Era-EngA-EngB-Septin-like GTPase superfamily. Era GTPase family. As to quaternary structure, monomer.

It is found in the cytoplasm. It localises to the cell membrane. Functionally, an essential GTPase that binds both GDP and GTP, with rapid nucleotide exchange. Plays a role in 16S rRNA processing and 30S ribosomal subunit biogenesis and possibly also in cell cycle regulation and energy metabolism. The protein is GTPase Era of Clostridium kluyveri (strain NBRC 12016).